Consider the following 166-residue polypeptide: Large ribosomal subunit protein uL11 (166 aa).

It belongs to the universal ribosomal protein uL11 family.

Functionally, this protein binds directly to 26S ribosomal RNA. The sequence is that of Large ribosomal subunit protein uL11 (RPL12) from Prunus armeniaca (Apricot).